A 633-amino-acid polypeptide reads, in one-letter code: Guanylate-binding protein 6 (633 aa).

The tract at residues 1–310 (MESGPKMLAP…EAINSGAVPC (310 aa)) is GTPase domain (Globular). The region spanning 35–277 (SQPVVVVAIV…FCSYIFTHAR (243 aa)) is the GB1/RHD3-type G domain. Residues 45-52 (GLYRTGKS), 67-69 (LGS), and 97-101 (DTEGL) contribute to the GTP site.

The protein belongs to the TRAFAC class dynamin-like GTPase superfamily. GB1/RHD3 GTPase family. GB1 subfamily. In terms of processing, (Microbial infection) Ubiquitinated by S.flexneri IpaH9.8, leading to its degradation by the proteasome, thereby preventing its ability to promote host defense against bacterial infection.

It localises to the cytoplasmic vesicle. The catalysed reaction is GTP + H2O = GDP + phosphate + H(+). Interferon (IFN)-inducible GTPase that plays important roles in innate immunity against a diverse range of bacterial, viral and protozoan pathogens, such as bacterial pathogens Listeria monocytogenes and Mycobacterium bovis BCG as well as the protozoan pathogen Toxoplasma gondii. Confers protection to several pathogens, including the bacterial pathogens Listeria monocytogenes and Mycobacterium bovis BCG as well as the protozoan pathogen Toxoplasma gondii. The chain is Guanylate-binding protein 6 (GBP6) from Homo sapiens (Human).